The following is a 237-amino-acid chain: Deoxyribose-phosphate aldolase (237 aa).

Asp-94 functions as the Proton donor/acceptor in the catalytic mechanism. The active-site Schiff-base intermediate with acetaldehyde is the Lys-158. Catalysis depends on Lys-187, which acts as the Proton donor/acceptor.

The protein belongs to the DeoC/FbaB aldolase family. DeoC type 1 subfamily.

It is found in the cytoplasm. The enzyme catalyses 2-deoxy-D-ribose 5-phosphate = D-glyceraldehyde 3-phosphate + acetaldehyde. It participates in carbohydrate degradation; 2-deoxy-D-ribose 1-phosphate degradation; D-glyceraldehyde 3-phosphate and acetaldehyde from 2-deoxy-alpha-D-ribose 1-phosphate: step 2/2. Functionally, catalyzes a reversible aldol reaction between acetaldehyde and D-glyceraldehyde 3-phosphate to generate 2-deoxy-D-ribose 5-phosphate. In Lactobacillus acidophilus (strain ATCC 700396 / NCK56 / N2 / NCFM), this protein is Deoxyribose-phosphate aldolase.